Consider the following 133-residue polypeptide: Putative esterase STK_17900 (133 aa).

Belongs to the thioesterase PaaI family.

This chain is Putative esterase STK_17900, found in Sulfurisphaera tokodaii (strain DSM 16993 / JCM 10545 / NBRC 100140 / 7) (Sulfolobus tokodaii).